A 762-amino-acid polypeptide reads, in one-letter code: MSVAETEEGVFEATATIDNGSFGTRTIRFETGRLAQQAAGSVVAYLDDENMLLSATTASKNPKEHFDFFPLTVDVEERMYAAGRIPGSFFRREGRPSTDAILTCRLIDRPLRPSFVNGLRNEIQVVVTILSLDPNDLYDVVAINAASASTQLAGLPFSGPVGGVRVALIDGQWVAFPNVEQLERAVFDMVVAGRIVGTEEDGTPDVAIMMVEAEATDKVIELVEGGAPAPTESVVAQGLEAAKPFIAALCTAQQELADASGATAKTGAEYPVFPEYGDDVYYAVSSVATDGLAAALTIGGKAERNQRTEEIKAEVLERLADTYEGREKEIGAAFRSLTKKLVRQRIVTDHFRIDGRGITDIRALSAEVALVPRAHGSALFERGETQILGVTTLDMVKMAQQIDSLGPETTKRYMHHYNFPPFSTGETGRVGSPKRREIGHGALAERALMPVLPSVEEFPYAIRQVSEALGSNGSTSMGSVCASTLALLNAGVPLKAPVAGIAMGLVSDDVEVDGKTERRFVTLTDILGAEDAFGDMDFKVAGTKDFVTALQLDTKLDGIPSQVLAGALAQAKDARLTILEVMAEAIDTPDEMSPYAPRVTTIKVPVDKIGEVIGPKGKVINSITEETGAQISIEDDGTVFVGATDGPSAQAAIDKINAIANPQLPTVGERFLGTVVKTTDFGAFVSLLPGRDGLVHISKLGKGKRIAKVEDVVNVGDKLRVEIADIDKRGKISLVLVAEDDDSAAAAAADSPAPADAATASS.

Mg(2+) is bound by residues Asp-531 and Asp-537. The 60-residue stretch at 597 to 656 folds into the KH domain; the sequence is PRVTTIKVPVDKIGEVIGPKGKVINSITEETGAQISIEDDGTVFVGATDGPSAQAAIDKI. The S1 motif domain occupies 668–737; the sequence is GERFLGTVVK…KRGKISLVLV (70 aa).

The protein belongs to the polyribonucleotide nucleotidyltransferase family. Mg(2+) serves as cofactor.

The protein localises to the cytoplasm. The enzyme catalyses RNA(n+1) + phosphate = RNA(n) + a ribonucleoside 5'-diphosphate. Its function is as follows. Involved in mRNA degradation. Catalyzes the phosphorolysis of single-stranded polyribonucleotides processively in the 3'- to 5'-direction. This is Polyribonucleotide nucleotidyltransferase from Mycobacterium marinum (strain ATCC BAA-535 / M).